Consider the following 100-residue polypeptide: Small ubiquitin-related modifier 1 (100 aa).

The segment covering Met1 to Gly12 has biased composition (basic and acidic residues). Residues Met1–Lys21 are disordered. The Ubiquitin-like domain maps to Ala16–Gly93. A Glycyl lysine isopeptide (Gly-Lys) (interchain with K-? in acceptor proteins) cross-link involves residue Gly93.

The protein belongs to the ubiquitin family. SUMO subfamily. As to quaternary structure, interacts with SAE2, SCE1, SIZ1 and MMS21. Interacts with HSFA2. Covalently attached to ABI5, FLD, GTE3, HSFA2 and ICE1.

It is found in the nucleus. Its subcellular location is the cytoplasm. In terms of biological role, ubiquitin-like protein which can be covalently attached to target lysines as a monomer. Does not seem to be involved in protein degradation and may function as an antagonist of ubiquitin in the degradation process. Required for the massive protein sumoylation in the nucleus induced by heat shock and controlled by SIZ1. Involved in the regulation of the heat stress transcription factor HSFA2 in acquired thermotolerance. The protein is Small ubiquitin-related modifier 1 of Arabidopsis thaliana (Mouse-ear cress).